A 344-amino-acid chain; its full sequence is 3-isopropylmalate dehydrogenase (344 aa).

Substrate is bound by residues R93, R103, R131, and D215. Residues D215, D239, and D243 each coordinate Mg(2+). 273-285 (GSAPDIAGKGIAN) is a binding site for NAD(+).

This sequence belongs to the isocitrate and isopropylmalate dehydrogenases family. LeuB type 1 subfamily. As to quaternary structure, homodimer. Requires Mg(2+) as cofactor. It depends on Mn(2+) as a cofactor.

Its subcellular location is the cytoplasm. The enzyme catalyses (2R,3S)-3-isopropylmalate + NAD(+) = 4-methyl-2-oxopentanoate + CO2 + NADH. It participates in amino-acid biosynthesis; L-leucine biosynthesis; L-leucine from 3-methyl-2-oxobutanoate: step 3/4. Functionally, catalyzes the oxidation of 3-carboxy-2-hydroxy-4-methylpentanoate (3-isopropylmalate) to 3-carboxy-4-methyl-2-oxopentanoate. The product decarboxylates to 4-methyl-2 oxopentanoate. This is 3-isopropylmalate dehydrogenase from Streptococcus mutans serotype c (strain ATCC 700610 / UA159).